The sequence spans 324 residues: Short chain dehydrogenase/reductase dmxR8 (324 aa).

NADP(+)-binding residues include Leu-33, Lys-58, Asp-83, and Asn-110. The active-site Proton donor is the Ser-163. Tyr-200 and Lys-204 together coordinate NADP(+). Tyr-200 serves as the catalytic Proton acceptor. Lys-204 serves as the catalytic Lowers pKa of active site Tyr.

The protein belongs to the short-chain dehydrogenases/reductases (SDR) family.

Its pathway is secondary metabolite biosynthesis. Its function is as follows. Short chain dehydrogenase; part of the gene cluster that mediates the biosynthesis of the dimeric xanthones cryptosporioptides. The pathway begins with the synthesis of atrochrysone thioester by the polyketide synthase dmx-nrPKS. The atrochrysone carboxyl ACP thioesterase dmxR1 then breaks the thioester bond and releases the atrochrysone carboxylic acid from dmx-nrPKS. Atrochrysone carboxylic acid is decarboxylated by the decarboxylase dmxR15, and oxidized by the anthrone oxygenase dmxR16 to yield emodin. Emodin is then reduced to emodin hydroquinone by the oxidoreductase dmxR7. A-ring reduction by the short chain dehydrogenase dmxR18, dehydration by the scytalone dehydratase-like protein dmxR17 and probable spontaneous re-oxidation, results in overall deoxygenation to chrysophanol. Baeyer-Villiger oxidation by the Baeyer-Villiger monooxygenase (BVMO) dmxR6 then yields monodictylactone in equilibrium with monodictyphenone. In the case of the cryptosporioptides biosynthesis, monodictylactone is reduced at C-12 to an alcohol (by the short chain dehydrogenases dmxR12 or dmxR8) and hydroxylated at C-5 by dmxR9, yielding the electron-rich aromatic which could eliminate H(2)O to form the ortho-quinonemethide, followed by tautomerisation to paraquinone and complete the formal reduction to produce the 10-methylgroup. Conjugate addition of C-4a-OH to the resulting paraquinone by the monooxygenase dmxR10 then gives cyclohexadienone, which is then reduced at C-5 by the short chain dehydrogenase dmxR3 to give the dihydroxanthone. The 6,7-epoxide in the cryptosporioptides could be introduced by the cytochrome P450 monooxygenase dmxL3. The highly reducing PKS dmxL2 manufactures butyrate, which is further carboxylated by dmxL1 to form ethylmalonate. It is not yet clear whether the carboxylation occurs while the butyrate is attached to the ACP of dmxL2, but this unusual fungal metabolite could then be esterified to O-5 by the O-acetyltransferase dmxR13. Finally, dimerization performed by dmxR5 gives the observed dimers cryptosporioptides A, B and C as the final products of the pathway. This Cryptosporiopsis sp. (strain 8999) protein is Short chain dehydrogenase/reductase dmxR8.